We begin with the raw amino-acid sequence, 197 residues long: UPF0228 protein MA_3125 (197 aa).

This sequence belongs to the UPF0228 family.

The polypeptide is UPF0228 protein MA_3125 (Methanosarcina acetivorans (strain ATCC 35395 / DSM 2834 / JCM 12185 / C2A)).